Here is a 297-residue protein sequence, read N- to C-terminus: 4-hydroxy-tetrahydrodipicolinate synthase (297 aa).

Threonine 49 is a pyruvate binding site. Tyrosine 137 (proton donor/acceptor) is an active-site residue. The Schiff-base intermediate with substrate role is filled by lysine 165. Residue isoleucine 208 coordinates pyruvate.

Belongs to the DapA family. In terms of assembly, homotetramer; dimer of dimers.

It localises to the cytoplasm. It catalyses the reaction L-aspartate 4-semialdehyde + pyruvate = (2S,4S)-4-hydroxy-2,3,4,5-tetrahydrodipicolinate + H2O + H(+). The protein operates within amino-acid biosynthesis; L-lysine biosynthesis via DAP pathway; (S)-tetrahydrodipicolinate from L-aspartate: step 3/4. Its function is as follows. Catalyzes the condensation of (S)-aspartate-beta-semialdehyde [(S)-ASA] and pyruvate to 4-hydroxy-tetrahydrodipicolinate (HTPA). The protein is 4-hydroxy-tetrahydrodipicolinate synthase of Gluconacetobacter diazotrophicus (strain ATCC 49037 / DSM 5601 / CCUG 37298 / CIP 103539 / LMG 7603 / PAl5).